We begin with the raw amino-acid sequence, 370 residues long: Tryptophan--tRNA ligase (370 aa).

The 'HIGH' region signature appears at Pro75–His83. Positions Lys255–Ser259 match the 'KMSKS' region motif.

Belongs to the class-I aminoacyl-tRNA synthetase family.

The protein resides in the cytoplasm. The catalysed reaction is tRNA(Trp) + L-tryptophan + ATP = L-tryptophyl-tRNA(Trp) + AMP + diphosphate + H(+). This chain is Tryptophan--tRNA ligase, found in Methanocaldococcus jannaschii (strain ATCC 43067 / DSM 2661 / JAL-1 / JCM 10045 / NBRC 100440) (Methanococcus jannaschii).